A 122-amino-acid chain; its full sequence is Large ribosomal subunit protein uL14c (122 aa).

This sequence belongs to the universal ribosomal protein uL14 family. Part of the 50S ribosomal subunit.

The protein resides in the plastid. Its function is as follows. Binds to 23S rRNA. In Cuscuta gronovii (Common dodder), this protein is Large ribosomal subunit protein uL14c.